The chain runs to 414 residues: Histidinol dehydrogenase (414 aa).

Tyrosine 116, glutamine 177, and asparagine 200 together coordinate NAD(+). Threonine 223, glutamine 245, and histidine 248 together coordinate substrate. Zn(2+) contacts are provided by glutamine 245 and histidine 248. Residues glutamate 313 and histidine 314 each act as proton acceptor in the active site. Positions 314, 347, 401, and 406 each coordinate substrate. A Zn(2+)-binding site is contributed by aspartate 347. Residue histidine 406 participates in Zn(2+) binding.

It belongs to the histidinol dehydrogenase family. Zn(2+) is required as a cofactor.

It carries out the reaction L-histidinol + 2 NAD(+) + H2O = L-histidine + 2 NADH + 3 H(+). The protein operates within amino-acid biosynthesis; L-histidine biosynthesis; L-histidine from 5-phospho-alpha-D-ribose 1-diphosphate: step 9/9. Functionally, catalyzes the sequential NAD-dependent oxidations of L-histidinol to L-histidinaldehyde and then to L-histidine. This is Histidinol dehydrogenase from Staphylococcus epidermidis (strain ATCC 35984 / DSM 28319 / BCRC 17069 / CCUG 31568 / BM 3577 / RP62A).